The sequence spans 120 residues: MSSQSYRERTLVSVIGDDDTVTGMLLAGTGQVNENGDKNFFIITQKTTDEQIAEAFDDYTTKRKDIAIVLINQFAAERIRDRIENHVQAFPAVLEIPSKDDPYDPEKDSILRRVRKIIGE.

It belongs to the V-ATPase F subunit family. V-ATPase is a heteromultimeric enzyme composed of a peripheral catalytic V1 complex (components A to H) attached to an integral membrane V0 proton pore complex (components: a, c, c', c'', d, e, f and VOA1).

Its subcellular location is the vacuole membrane. Functionally, subunit of the V1 complex of vacuolar(H+)-ATPase (V-ATPase), a multisubunit enzyme composed of a peripheral complex (V1) that hydrolyzes ATP and a membrane integral complex (V0) that translocates protons. V-ATPase is responsible for acidifying and maintaining the pH of intracellular compartments. This chain is V-type proton ATPase subunit F, found in Schizosaccharomyces pombe (strain 972 / ATCC 24843) (Fission yeast).